Reading from the N-terminus, the 199-residue chain is Probable nicotinate-nucleotide adenylyltransferase (199 aa).

It belongs to the NadD family.

The enzyme catalyses nicotinate beta-D-ribonucleotide + ATP + H(+) = deamido-NAD(+) + diphosphate. Its pathway is cofactor biosynthesis; NAD(+) biosynthesis; deamido-NAD(+) from nicotinate D-ribonucleotide: step 1/1. Catalyzes the reversible adenylation of nicotinate mononucleotide (NaMN) to nicotinic acid adenine dinucleotide (NaAD). In Roseiflexus sp. (strain RS-1), this protein is Probable nicotinate-nucleotide adenylyltransferase.